The primary structure comprises 224 residues: V-type ATP synthase subunit D (224 aa).

The disordered stretch occupies residues arginine 190–aspartate 224. A compositionally biased stretch (basic and acidic residues) spans alanine 201–glutamate 212. Positions alanine 213 to aspartate 224 are enriched in low complexity.

It belongs to the V-ATPase D subunit family.

Functionally, produces ATP from ADP in the presence of a proton gradient across the membrane. The polypeptide is V-type ATP synthase subunit D (atpD) (Deinococcus radiodurans (strain ATCC 13939 / DSM 20539 / JCM 16871 / CCUG 27074 / LMG 4051 / NBRC 15346 / NCIMB 9279 / VKM B-1422 / R1)).